A 104-amino-acid polypeptide reads, in one-letter code: UPF0473 protein LGAS_0424 (104 aa).

It belongs to the UPF0473 family.

This is UPF0473 protein LGAS_0424 from Lactobacillus gasseri (strain ATCC 33323 / DSM 20243 / BCRC 14619 / CIP 102991 / JCM 1131 / KCTC 3163 / NCIMB 11718 / NCTC 13722 / AM63).